Consider the following 289-residue polypeptide: MIKVEIDEGSGFCFGVVTAIHKAEEELAKGETLYCLGDIVHNSREVERLKAMGLITINRDEFRQLRNAKVLLRAHGEPPETYQIAHKNNIEIIDATCPVVLRLQKRIKQEFRKEDFEEKQIVIYGKNGHAEVLGLVGQTGGQAIVIESAEEAKKLDFTKSIRLFSQTTKSLDEFQEIVEYIKLHISPDATFEYYDTICRQVANRMPNLREFAATHDLIFFVSGKKSSNGKMLFEECLKVNANSHLIDNEKEIDPTLLRNVKSIGVCGATSTPKWLMEKIHDHIQLLIKD.

[4Fe-4S] cluster is bound at residue Cys13. Residues His41 and His75 each contribute to the (2E)-4-hydroxy-3-methylbut-2-enyl diphosphate site. Dimethylallyl diphosphate contacts are provided by His41 and His75. His41 and His75 together coordinate isopentenyl diphosphate. Cys97 is a [4Fe-4S] cluster binding site. Position 129 (His129) interacts with (2E)-4-hydroxy-3-methylbut-2-enyl diphosphate. Position 129 (His129) interacts with dimethylallyl diphosphate. An isopentenyl diphosphate-binding site is contributed by His129. Glu131 (proton donor) is an active-site residue. Thr167 is a (2E)-4-hydroxy-3-methylbut-2-enyl diphosphate binding site. Cys198 lines the [4Fe-4S] cluster pocket. 4 residues coordinate (2E)-4-hydroxy-3-methylbut-2-enyl diphosphate: Ser226, Ser227, Asn228, and Ser270. Dimethylallyl diphosphate is bound by residues Ser226, Ser227, Asn228, and Ser270. Isopentenyl diphosphate contacts are provided by Ser226, Ser227, Asn228, and Ser270.

The protein belongs to the IspH family. [4Fe-4S] cluster serves as cofactor.

It catalyses the reaction isopentenyl diphosphate + 2 oxidized [2Fe-2S]-[ferredoxin] + H2O = (2E)-4-hydroxy-3-methylbut-2-enyl diphosphate + 2 reduced [2Fe-2S]-[ferredoxin] + 2 H(+). The enzyme catalyses dimethylallyl diphosphate + 2 oxidized [2Fe-2S]-[ferredoxin] + H2O = (2E)-4-hydroxy-3-methylbut-2-enyl diphosphate + 2 reduced [2Fe-2S]-[ferredoxin] + 2 H(+). Its pathway is isoprenoid biosynthesis; dimethylallyl diphosphate biosynthesis; dimethylallyl diphosphate from (2E)-4-hydroxy-3-methylbutenyl diphosphate: step 1/1. The protein operates within isoprenoid biosynthesis; isopentenyl diphosphate biosynthesis via DXP pathway; isopentenyl diphosphate from 1-deoxy-D-xylulose 5-phosphate: step 6/6. Its function is as follows. Catalyzes the conversion of 1-hydroxy-2-methyl-2-(E)-butenyl 4-diphosphate (HMBPP) into a mixture of isopentenyl diphosphate (IPP) and dimethylallyl diphosphate (DMAPP). Acts in the terminal step of the DOXP/MEP pathway for isoprenoid precursor biosynthesis. The polypeptide is 4-hydroxy-3-methylbut-2-enyl diphosphate reductase (Bacteroides thetaiotaomicron (strain ATCC 29148 / DSM 2079 / JCM 5827 / CCUG 10774 / NCTC 10582 / VPI-5482 / E50)).